Consider the following 444-residue polypeptide: MSVIHPLQNLLTSRDGSLVFAIIKNCILSFKYQSPNHWEFAGKWSDDFDKIQESRNTTAKEQQGQSSENENENKKLKSNKGDSIKRTAAKVPSPGLGAPPIYSYIRNLRLTSDESRLIACADSDKSLLVFDVDKTSKNVLKLRKRFCFSKRPNAISIAEDDTTVIIADKFGDVYSIDINSIPEEKFTQEPILGHVSMLTDVHLIKDSDGHQFIITSDRDEHIKISHYPQCFIVDKWLFGHKHFVSSICCGKDYLLLSAGGDDKIFAWDWKTGKNLSTFDYNSLIKPYLNDQHLAPPRFQNENNDIIEFAVSKIIKSKNLPFVAFFVEATKCIIILEMSEKQKGDLALKQIITFPYNVISLSAHNDEFQVTLDNKESSGVQKNFAKFIEYNLNENSFVVNNEKSNEFDSAIIQSVQGDSNLVTKKEEIYPLYNVSSLRKHGEHYS.

WD repeat units follow at residues 1–47 (MSVI…WSDD), 48–99 (FDKI…LGAP), 100–147 (PIYS…KRFC), 148–192 (FSKR…EPIL), 193–237 (GHVS…DKWL), 238–279 (FGHK…STFD), and 308–354 (FAVS…ITFP). The segment at 55-92 (RNTTAKEQQGQSSENENENKKLKSNKGDSIKRTAAKVP) is disordered. Positions 71-85 (NENKKLKSNKGDSIK) are enriched in basic and acidic residues. A Phosphoserine modification is found at Ser-93.

The protein belongs to the WD repeat TRM82 family. Forms a heterodimer with the catalytic subunit TRM8.

The protein localises to the nucleus. It participates in tRNA modification; N(7)-methylguanine-tRNA biosynthesis. In terms of biological role, required for the formation of N(7)-methylguanine at position 46 (m7G46) in tRNA, a modification required to maintain stability of tRNAs; its absence resulting in tRNA decay. In the complex, it is required to stabilize and induce conformational changes of the catalytic subunit. The polypeptide is tRNA (guanine-N(7)-)-methyltransferase non-catalytic subunit TRM82 (Saccharomyces cerevisiae (strain ATCC 204508 / S288c) (Baker's yeast)).